A 126-amino-acid chain; its full sequence is Aspartate 1-decarboxylase (126 aa).

The Schiff-base intermediate with substrate; via pyruvic acid role is filled by S25. Position 25 is a pyruvic acid (Ser) (S25). T57 is a substrate binding site. Y58 serves as the catalytic Proton donor. 73-75 serves as a coordination point for substrate; the sequence is GAA.

This sequence belongs to the PanD family. As to quaternary structure, heterooctamer of four alpha and four beta subunits. Pyruvate serves as cofactor. In terms of processing, is synthesized initially as an inactive proenzyme, which is activated by self-cleavage at a specific serine bond to produce a beta-subunit with a hydroxyl group at its C-terminus and an alpha-subunit with a pyruvoyl group at its N-terminus.

The protein localises to the cytoplasm. The enzyme catalyses L-aspartate + H(+) = beta-alanine + CO2. The protein operates within cofactor biosynthesis; (R)-pantothenate biosynthesis; beta-alanine from L-aspartate: step 1/1. Functionally, catalyzes the pyruvoyl-dependent decarboxylation of aspartate to produce beta-alanine. This is Aspartate 1-decarboxylase from Psychromonas ingrahamii (strain DSM 17664 / CCUG 51855 / 37).